The following is a 347-amino-acid chain: Gamma-glutamyl hydrolase B (347 aa).

The N-terminal stretch at methionine 1–threonine 22 is a signal peptide. One can recognise a Gamma-glutamyl hydrolase domain in the interval isoleucine 23–asparagine 314. Catalysis depends on cysteine 128, which acts as the Nucleophile. Residues asparagine 152, asparagine 158, and asparagine 201 are each glycosylated (N-linked (GlcNAc...) asparagine). Histidine 240 acts as the Proton donor in catalysis. 3 N-linked (GlcNAc...) asparagine glycosylation sites follow: asparagine 273, asparagine 314, and asparagine 318.

The protein belongs to the peptidase C26 family.

The protein localises to the secreted. It localises to the extracellular space. It catalyses the reaction (6S)-5,6,7,8-tetrahydrofolyl-(gamma-L-Glu)(n) + (n-1) H2O = (6S)-5,6,7,8-tetrahydrofolate + (n-1) L-glutamate. The polypeptide is Gamma-glutamyl hydrolase B (gghB) (Dictyostelium discoideum (Social amoeba)).